Consider the following 86-residue polypeptide: Large ribosomal subunit protein bL31B (86 aa).

It belongs to the bacterial ribosomal protein bL31 family. Type B subfamily. Part of the 50S ribosomal subunit.

The protein is Large ribosomal subunit protein bL31B of Cupriavidus pinatubonensis (strain JMP 134 / LMG 1197) (Cupriavidus necator (strain JMP 134)).